The sequence spans 138 residues: ATP synthase epsilon chain (138 aa).

It belongs to the ATPase epsilon chain family. F-type ATPases have 2 components, CF(1) - the catalytic core - and CF(0) - the membrane proton channel. CF(1) has five subunits: alpha(3), beta(3), gamma(1), delta(1), epsilon(1). CF(0) has three main subunits: a, b and c.

It localises to the cell inner membrane. Produces ATP from ADP in the presence of a proton gradient across the membrane. This Bartonella henselae (strain ATCC 49882 / DSM 28221 / CCUG 30454 / Houston 1) (Rochalimaea henselae) protein is ATP synthase epsilon chain.